The primary structure comprises 90 residues: Large ribosomal subunit protein bL27 (90 aa).

Residues 1-22 (MAHKKAGGSSRNGRDSESKRLG) form a disordered region.

This sequence belongs to the bacterial ribosomal protein bL27 family.

The polypeptide is Large ribosomal subunit protein bL27 (Allorhizobium ampelinum (strain ATCC BAA-846 / DSM 112012 / S4) (Agrobacterium vitis (strain S4))).